The primary structure comprises 121 residues: Large ribosomal subunit protein uL18c (121 aa).

Belongs to the universal ribosomal protein uL18 family. Part of the 50S ribosomal subunit; contacts the 5S rRNA.

The protein localises to the plastid. Its subcellular location is the cyanelle. Binds 5S rRNA, forms part of the central protuberance of the 50S subunit. The polypeptide is Large ribosomal subunit protein uL18c (rpl18) (Cyanophora paradoxa).